The following is a 30-amino-acid chain: Brevinin-2Rg (30 aa).

A disulfide bridge links cysteine 24 with cysteine 30.

Expressed by the skin glands.

It localises to the secreted. Functionally, antimicrobial peptide. This is Brevinin-2Rg from Pelophylax ridibundus (Marsh frog).